A 346-amino-acid chain; its full sequence is Probable alpha-1,2-galactosyltransferase gmh2 (346 aa).

The Cytoplasmic segment spans residues 1-11; that stretch reads MALMLSRIPRR. The helical; Signal-anchor for type II membrane protein transmembrane segment at 12–32 threads the bilayer; sequence FFFLFLTVGLIAGAFLYSLIY. Topologically, residues 33–346 are lumenal; that stretch reads FVDVDLVSKV…LWQKFYALID (314 aa). Asn-64, Asn-142, and Asn-224 each carry an N-linked (GlcNAc...) asparagine glycan.

It belongs to the glycosyltransferase 34 family.

It localises to the golgi apparatus membrane. The polypeptide is Probable alpha-1,2-galactosyltransferase gmh2 (gmh2) (Schizosaccharomyces pombe (strain 972 / ATCC 24843) (Fission yeast)).